Here is a 305-residue protein sequence, read N- to C-terminus: Heme A synthase (305 aa).

Residues 1 to 6 (MKKFLK) are Cytoplasmic-facing. A helical membrane pass occupies residues 7–27 (VWSVLTIICMTVVVFGGALVT). Residues 28–63 (KTGSADGCGNSWPLCNGQLVRLTDVTPEKLIEFMHR) are Extracellular-facing. A disulfide bridge connects residues C35 and C42. E59 is a catalytic residue. H62 serves as a coordination point for heme o. Residues 64-84 (MTTGISSIFVIVLAICAWIYM) traverse the membrane as a helical segment. The Cytoplasmic portion of the chain corresponds to 85–92 (KNRRETKP). A helical transmembrane segment spans residues 93 to 113 (LAIIAVLFLIIQALMGMAAVV). At 114–122 (WGQNPYIMA) the chain is on the extracellular side. The helical transmembrane segment at 123 to 143 (LHFGISIICYASIVLLALMIF) threads the bilayer. H124 provides a ligand contact to heme o. Residues 144-160 (EVDRKFDARNLVMGTKL) lie on the Cytoplasmic side of the membrane. Residues 161–181 (RINIYALTIYTYLAVYTGALV) form a helical membrane-spanning segment. Residues 182–212 (RHEKASMAVPVWPFENGHFIMPTSVQDYVQY) are Extracellular-facing. Residues 213-233 (FHRLAAFILIVWLLYVTWLVF) form a helical membrane-spanning segment. H214 is a binding site for heme b. Residues 234 to 240 (RDYRRYR) are Cytoplasmic-facing. The chain crosses the membrane as a helical span at residues 241–261 (VLTFSMVLSLVFIALQAVTGA). Residues 262 to 271 (LSVYTGVNLY) are Extracellular-facing. The helical transmembrane segment at 272–292 (IALAHSLIITMLFALLCYLCL) threads the bilayer. H276 lines the heme b pocket. The Cytoplasmic segment spans residues 293–305 (LASRSKSNRLRIK).

It belongs to the COX15/CtaA family. Type 1 subfamily. Interacts with CtaB. Requires heme b as cofactor.

The protein localises to the cell membrane. It carries out the reaction Fe(II)-heme o + 2 A + H2O = Fe(II)-heme a + 2 AH2. Its pathway is porphyrin-containing compound metabolism; heme A biosynthesis; heme A from heme O: step 1/1. In terms of biological role, catalyzes the conversion of heme O to heme A by two successive hydroxylations of the methyl group at C8. The first hydroxylation forms heme I, the second hydroxylation results in an unstable dihydroxymethyl group, which spontaneously dehydrates, resulting in the formyl group of heme A. The protein is Heme A synthase of Listeria monocytogenes serotype 4b (strain F2365).